The following is a 263-amino-acid chain: MPRLIPLLALLLCASASAELRADITKGTPHGYGAMKVYDGQTLLFQATTRGLSAVTASKFSPDGRWLVNLTDQGYVQLWDVHKGERVKTFLAPFARVLNADFTPDSTRLLLNFWGDSTPTNFWQGTRSSFWSLEPLQRLGTLDGKGWDIGYSGNVHFDAAGKRMVTASFRFFGGQAAAVYDAATGAPIATLSRVPYPPGALQTGGAGAADARLAPDGRRALVYDVAGRLAEYDAATSQLLKVRGKVDSAGAGAQLERFAREGK.

The stretch at 53–89 (SAVTASKFSPDGRWLVNLTDQGYVQLWDVHKGERVKT) is one WD repeat.

This is an uncharacterized protein from Deinococcus radiodurans (strain ATCC 13939 / DSM 20539 / JCM 16871 / CCUG 27074 / LMG 4051 / NBRC 15346 / NCIMB 9279 / VKM B-1422 / R1).